A 152-amino-acid chain; its full sequence is Xanthine-guanine phosphoribosyltransferase (152 aa).

5-phospho-alpha-D-ribose 1-diphosphate contacts are provided by residues 37 to 38 (RG), Arg69, and 88 to 96 (DDLVDTGVT). Residue Arg69 coordinates GMP. Asp89 is a binding site for Mg(2+). 2 residues coordinate guanine: Asp92 and Ile135. Xanthine contacts are provided by Asp92 and Ile135. Residues 92–96 (DTGVT) and 134–135 (WI) contribute to the GMP site.

Belongs to the purine/pyrimidine phosphoribosyltransferase family. XGPT subfamily. Homotetramer. Mg(2+) is required as a cofactor.

It localises to the cell inner membrane. It carries out the reaction GMP + diphosphate = guanine + 5-phospho-alpha-D-ribose 1-diphosphate. The catalysed reaction is XMP + diphosphate = xanthine + 5-phospho-alpha-D-ribose 1-diphosphate. The enzyme catalyses IMP + diphosphate = hypoxanthine + 5-phospho-alpha-D-ribose 1-diphosphate. It functions in the pathway purine metabolism; GMP biosynthesis via salvage pathway; GMP from guanine: step 1/1. Its pathway is purine metabolism; XMP biosynthesis via salvage pathway; XMP from xanthine: step 1/1. Its function is as follows. Purine salvage pathway enzyme that catalyzes the transfer of the ribosyl-5-phosphate group from 5-phospho-alpha-D-ribose 1-diphosphate (PRPP) to the N9 position of the 6-oxopurines guanine and xanthine to form the corresponding ribonucleotides GMP (guanosine 5'-monophosphate) and XMP (xanthosine 5'-monophosphate), with the release of PPi. To a lesser extent, also acts on hypoxanthine. The polypeptide is Xanthine-guanine phosphoribosyltransferase (Sodalis glossinidius (strain morsitans)).